A 601-amino-acid chain; its full sequence is Glutathione-regulated potassium-efflux system protein KefB (601 aa).

Transmembrane regions (helical) follow at residues 4-24, 29-49, 55-75, 87-107, 111-131, 152-172, 177-197, 207-227, 230-250, 262-282, 284-304, 324-344, and 356-376; these read ADLL…VPLA, IGAV…GLGF, EILH…GLEL, IFGV…GLLM, FLWQ…TAMA, VLLF…LLAG, HFDW…LIGG, FIAA…LVLS, LFMD…GVLL, AIDP…GMSL, LGVL…LVVI, MQFA…FSTA, and ALLL…MKGI. One can recognise an RCK N-terminal domain in the interval 400–519; that stretch reads KPQVIVVGFG…AGVTQFSRET (120 aa).

It belongs to the monovalent cation:proton antiporter 2 (CPA2) transporter (TC 2.A.37) family. KefB subfamily. As to quaternary structure, interacts with the regulatory subunit KefG.

The protein localises to the cell inner membrane. Pore-forming subunit of a potassium efflux system that confers protection against electrophiles. Catalyzes K(+)/H(+) antiport. The chain is Glutathione-regulated potassium-efflux system protein KefB from Salmonella paratyphi B (strain ATCC BAA-1250 / SPB7).